A 512-amino-acid chain; its full sequence is cAMP-dependent protein kinase catalytic subunit (512 aa).

Residues 1 to 15 (MDTTAVASKGSTNVG) show a composition bias toward polar residues. 2 disordered regions span residues 1–79 (MDTT…SSLW) and 118–166 (IDNL…GLRD). The span at 16–27 (SSTDTLSTSASL) shows a compositional bias: low complexity. 2 stretches are compositionally biased toward polar residues: residues 32–52 (NAGSVNEYSEQQRHGTNSFNG) and 62–79 (SDASVSNGHNNHNESSLW). Over residues 143–166 (SRDGRGELGSEHGERRSAMDGLRD) the composition is skewed to basic and acidic residues. The region spanning 201 to 456 (FNFLQTLGTG…SMDIIMHPWF (256 aa)) is the Protein kinase domain. Residues 207-215 (LGTGSFGRV) and Lys-230 each bind ATP. Asp-324 acts as the Proton acceptor in catalysis. Thr-356 is subject to Phosphothreonine. One can recognise an AGC-kinase C-terminal domain in the interval 457-512 (RDISWDKILTRKIEVPYVPPIQAGMGDSSQFDAYADVATDYGTSEDPEFTSIFKDF).

The protein belongs to the protein kinase superfamily. AGC Ser/Thr protein kinase family. cAMP subfamily.

It carries out the reaction L-seryl-[protein] + ATP = O-phospho-L-seryl-[protein] + ADP + H(+). The catalysed reaction is L-threonyl-[protein] + ATP = O-phospho-L-threonyl-[protein] + ADP + H(+). With respect to regulation, activated by cAMP. This Schizosaccharomyces pombe (strain 972 / ATCC 24843) (Fission yeast) protein is cAMP-dependent protein kinase catalytic subunit (pka1).